The sequence spans 1070 residues: uncharacterized protein (1070 aa).

The region spanning 477–523 (LIDTNQLLLRQLQQIVKLGIFNEKKIKEELKANKFNEQVALQILESE) is the UBA domain.

This is an uncharacterized protein from Sulfolobus islandicus rod-shaped virus 1 (SIRV-1).